A 546-amino-acid chain; its full sequence is CTP synthase (546 aa).

Residues 1–266 form an amidoligase domain region; sequence MTTRYIFVTG…DDLVVKRFGL (266 aa). Residue S14 coordinates CTP. S14 contributes to the UTP binding site. Residues 15-20 and D72 each bind ATP; that span reads SLGKGI. Positions 72 and 140 each coordinate Mg(2+). Residues 147–149, 187–192, and K223 contribute to the CTP site; these read DIE and KTKPTQ. UTP is bound by residues 187–192 and K223; that span reads KTKPTQ. An ATP-binding site is contributed by 239–241; that stretch reads KDV. One can recognise a Glutamine amidotransferase type-1 domain in the interval 291 to 542; that stretch reads VIGMVGKYIE…VAAASAHQKR (252 aa). G352 contributes to the L-glutamine binding site. The active-site Nucleophile; for glutamine hydrolysis is C379. Residues 380 to 383, E403, and R470 each bind L-glutamine; that span reads LGMQ. Active-site residues include H515 and E517.

Belongs to the CTP synthase family. Homotetramer.

It catalyses the reaction UTP + L-glutamine + ATP + H2O = CTP + L-glutamate + ADP + phosphate + 2 H(+). The enzyme catalyses L-glutamine + H2O = L-glutamate + NH4(+). The catalysed reaction is UTP + NH4(+) + ATP = CTP + ADP + phosphate + 2 H(+). Its pathway is pyrimidine metabolism; CTP biosynthesis via de novo pathway; CTP from UDP: step 2/2. With respect to regulation, allosterically activated by GTP, when glutamine is the substrate; GTP has no effect on the reaction when ammonia is the substrate. The allosteric effector GTP functions by stabilizing the protein conformation that binds the tetrahedral intermediate(s) formed during glutamine hydrolysis. Inhibited by the product CTP, via allosteric rather than competitive inhibition. Functionally, catalyzes the ATP-dependent amination of UTP to CTP with either L-glutamine or ammonia as the source of nitrogen. Regulates intracellular CTP levels through interactions with the four ribonucleotide triphosphates. The sequence is that of CTP synthase from Shewanella sp. (strain MR-7).